The chain runs to 35 residues: Toxin Ado1 (35 aa).

3 cysteine pairs are disulfide-bonded: cysteine 5–cysteine 20, cysteine 12–cysteine 25, and cysteine 19–cysteine 32.

It is found in the secreted. Functionally, binds reversibly and blocks P/Q-type voltage-gated calcium channels (Cav). The polypeptide is Toxin Ado1 (Agriosphodrus dohrni (Japanese assassin-bug)).